Consider the following 180-residue polypeptide: Bifunctional protein PyrR (180 aa).

Residues 39-40, 103-111, and Arg136 contribute to the substrate site; these read TR and DDVLYTGRT. The PRPP-binding motif lies at 99 to 111; that stretch reads VILIDDVLYTGRT.

It belongs to the purine/pyrimidine phosphoribosyltransferase family. PyrR subfamily. In terms of assembly, homodimer and homohexamer; in equilibrium.

The catalysed reaction is UMP + diphosphate = 5-phospho-alpha-D-ribose 1-diphosphate + uracil. In terms of biological role, regulates transcriptional attenuation of the pyrimidine nucleotide (pyr) operon by binding in a uridine-dependent manner to specific sites on pyr mRNA. This disrupts an antiterminator hairpin in the RNA and favors formation of a downstream transcription terminator, leading to a reduced expression of downstream genes. Functionally, also displays a weak uracil phosphoribosyltransferase activity which is not physiologically significant. The polypeptide is Bifunctional protein PyrR (Halalkalibacterium halodurans (strain ATCC BAA-125 / DSM 18197 / FERM 7344 / JCM 9153 / C-125) (Bacillus halodurans)).